A 310-amino-acid chain; its full sequence is Cell division protein FtsQ (310 aa).

The disordered stretch occupies residues 1 to 57 (MSEPENTAEDKDAEAAISADAVESETTADGGENPAEGESAEGPRMRARRERMERREA). Residues 1-95 (MSEPENTAED…AGRGKVQGLQ (95 aa)) lie on the Cytoplasmic side of the membrane. Residues 96–116 (TLLLVVLLALIAVGLGSILYF) traverse the membrane as a helical segment. Over 117–310 (TPLMSVRQTV…VSSPDLPTVK (194 aa)) the chain is Extracellular. Residues 120–188 (MSVRQTVVTG…STLRVTIVER (69 aa)) form the POTRA domain.

This sequence belongs to the FtsQ/DivIB family. FtsQ subfamily.

The protein localises to the cell membrane. In terms of biological role, essential cell division protein. The chain is Cell division protein FtsQ from Mycobacteroides abscessus (strain ATCC 19977 / DSM 44196 / CCUG 20993 / CIP 104536 / JCM 13569 / NCTC 13031 / TMC 1543 / L948) (Mycobacterium abscessus).